Consider the following 400-residue polypeptide: Argininosuccinate synthase (400 aa).

An ATP-binding site is contributed by 9–17 (AYSGGLDTS). Tyr87 provides a ligand contact to L-citrulline. Gly117 contributes to the ATP binding site. The L-aspartate site is built by Thr119, Asn123, and Asp124. Asn123 is an L-citrulline binding site. 5 residues coordinate L-citrulline: Arg127, Ser176, Ser185, Glu261, and Tyr273.

The protein belongs to the argininosuccinate synthase family. Type 1 subfamily. Homotetramer.

It is found in the cytoplasm. It catalyses the reaction L-citrulline + L-aspartate + ATP = 2-(N(omega)-L-arginino)succinate + AMP + diphosphate + H(+). Its pathway is amino-acid biosynthesis; L-arginine biosynthesis; L-arginine from L-ornithine and carbamoyl phosphate: step 2/3. This chain is Argininosuccinate synthase, found in Chlorobium limicola (strain DSM 245 / NBRC 103803 / 6330).